A 115-amino-acid chain; its full sequence is U3-lycotoxin-Ls1k (115 aa).

The N-terminal stretch at 1–20 is a signal peptide; that stretch reads MKFVLLFGVLLVTLFSYSSA. A propeptide spanning residues 21-44 is cleaved from the precursor; sequence EMLDDFDQADEDELLSLIEKEEAR. Cystine bridges form between Cys-48–Cys-63, Cys-55–Cys-72, Cys-62–Cys-87, and Cys-74–Cys-85.

Belongs to the neurotoxin 19 (CSTX) family. 01 subfamily. As to expression, expressed by the venom gland.

It is found in the secreted. The sequence is that of U3-lycotoxin-Ls1k from Lycosa singoriensis (Wolf spider).